A 565-amino-acid chain; its full sequence is MLVLTETSVGFVVFKLSSDAKIDNKDLWKEFETPEGANKALKVQAIQRFTSTASAVEDLTAVQDGRLTDSLSRFLLDTVGGADDGEKKKKKKKIEEMLVVSDPKLAGTINKALSIPVLSDSSTQDLYRGIRQQLASLLGGVDQKDLNTMSLGLGHSLSRFKLKFSTDKVDTMVIQAIALLDDLDKEINIYAMRVKEWYGWHFPEMAKIIVDNIAFARVVKAMGFRTNAVTTDFSLLLPEDLEATLKSAAELSMGTEISDSDMTHIHSLCDQVISISEYRTQLSEYLRNRMQAIAPNLTALVGELVGARLISHAGSLMNLAKHPASTVQILGAEKALFRALKTKHDTPKYGLIYHASLIGQAPQKLKGKMARMVATKAALSIRVDALSDADSRSDVSAAEVGISNRVKLESRLRALEHQAGIQSVRKVVSANGQQGRQQPRFEMSGVTGSYNAATDNVPLNGDLLPTQPATEEVKEEKDEKKDKKKKRKSEVAEAGDVTMDGDADLSMVAGETKEERRARKEAKKAAKAAKKAAEESGDGDKKSKKRRADEDEDSEKKKKKKKKDE.

The 125-residue stretch at 293–417 (IAPNLTALVG…LESRLRALEH (125 aa)) folds into the Nop domain. The disordered stretch occupies residues 430-565 (ANGQQGRQQP…KKKKKKKKDE (136 aa)). The segment covering 471-481 (EEVKEEKDEKK) has biased composition (basic and acidic residues). A compositionally biased stretch (basic residues) spans 519–530 (RKEAKKAAKAAK). The segment covering 531–541 (KAAEESGDGDK) has biased composition (basic and acidic residues).

This sequence belongs to the NOP5/NOP56 family.

Its subcellular location is the nucleus. The protein localises to the nucleolus. Functionally, required for pre-18S rRNA processing. May bind microtubules. This chain is Nucleolar protein 58 (NOP58), found in Cryptococcus neoformans var. neoformans serotype D (strain B-3501A) (Filobasidiella neoformans).